Here is a 281-residue protein sequence, read N- to C-terminus: Radiation response metalloprotease IrrE (281 aa).

Histidine 82 contacts Zn(2+). The active site involves glutamate 83. Histidine 86 and glutamate 113 together coordinate Zn(2+). The tract at residues 262-281 is disordered; it reads LPAGRSEPDADKPEAPGDQS. The segment covering 267 to 281 has biased composition (basic and acidic residues); sequence SEPDADKPEAPGDQS.

As to quaternary structure, interacts with DdrOC.

Its activity is regulated as follows. Protease activity is inhibited by EDTA. Functionally, plays a central regulatory role in DNA repair and protection pathways in response to radiation stress. Acts as a site-specific metalloprotease that cleaves and inactivates the repressor proteins DdrOC and DdrOP3, resulting in induced expression of genes required for DNA repair and cell survival after exposure to radiation. The sequence is that of Radiation response metalloprotease IrrE from Deinococcus deserti (strain DSM 17065 / CIP 109153 / LMG 22923 / VCD115).